A 223-amino-acid chain; its full sequence is MKSGLLLAVILPVAFAVKKDQQSCNSSCVKVLQKQQESCPSGSDADCLCKLSDSDYWEPLTDCDCINPDKKLSASEIKVQICGAPSSSSTPTSSTETTSSTEAETTEAETTEQPSSSTSSNTESSKTTILETPSIQELNAESTTSVITPLTESAVAAVANTDTSTLIEPQNTEATPEVAPLIQPQLNNGSDLAQVSVQAFENGAGRAAVIGSGSLLALLLNFI.

A signal peptide spans Met1–Ala16. Asn25 is a glycosylation site (N-linked (GlcNAc...) asparagine). Residues Gly83–Ser134 form a disordered region. Low complexity-rich tracts occupy residues Ala84–Ala103 and Thr111–Thr128. An N-linked (GlcNAc...) asparagine glycan is attached at Asn188. The GPI-anchor amidated asparagine moiety is linked to residue Asn202. A propeptide spans Gly203–Ile223 (removed in mature form).

This sequence belongs to the IHD1 family. In terms of processing, the GPI-anchor is attached to the protein in the endoplasmic reticulum and serves to target the protein to the cell surface. There, the glucosamine-inositol phospholipid moiety is cleaved off and the GPI-modified mannoprotein is covalently attached via its lipidless GPI glycan remnant to the 1,6-beta-glucan of the outer cell wall layer.

It localises to the secreted. It is found in the cell wall. The protein localises to the membrane. Its function is as follows. Probable GPI-anchored cell wall protein that may be involved in cell wall organization, hyphal growth, as well as in virulence. This is Probable cell wall protein PGA61 (PGA61) from Candida albicans (strain SC5314 / ATCC MYA-2876) (Yeast).